Here is a 436-residue protein sequence, read N- to C-terminus: Gamma-glutamyl phosphate reductase (436 aa).

This sequence belongs to the gamma-glutamyl phosphate reductase family.

It is found in the cytoplasm. It carries out the reaction L-glutamate 5-semialdehyde + phosphate + NADP(+) = L-glutamyl 5-phosphate + NADPH + H(+). It participates in amino-acid biosynthesis; L-proline biosynthesis; L-glutamate 5-semialdehyde from L-glutamate: step 2/2. Functionally, catalyzes the NADPH-dependent reduction of L-glutamate 5-phosphate into L-glutamate 5-semialdehyde and phosphate. The product spontaneously undergoes cyclization to form 1-pyrroline-5-carboxylate. The chain is Gamma-glutamyl phosphate reductase from Prochlorococcus marinus (strain SARG / CCMP1375 / SS120).